Consider the following 35-residue polypeptide: Coenzyme PQQ synthesis protein A (35 aa).

The pyrroloquinoline quinone (Glu-Tyr) cross-link spans 16 to 20 (EINMY).

This sequence belongs to the PqqA family.

It participates in cofactor biosynthesis; pyrroloquinoline quinone biosynthesis. Its function is as follows. Required for coenzyme pyrroloquinoline quinone (PQQ) biosynthesis. PQQ is probably formed by cross-linking a specific glutamate to a specific tyrosine residue and excising these residues from the peptide. In Roseobacter denitrificans (strain ATCC 33942 / OCh 114) (Erythrobacter sp. (strain OCh 114)), this protein is Coenzyme PQQ synthesis protein A.